Here is a 335-residue protein sequence, read N- to C-terminus: UPF0284 protein TK0853 (335 aa).

The protein belongs to the UPF0284 family.

In Thermococcus kodakarensis (strain ATCC BAA-918 / JCM 12380 / KOD1) (Pyrococcus kodakaraensis (strain KOD1)), this protein is UPF0284 protein TK0853.